Here is a 136-residue protein sequence, read N- to C-terminus: uncharacterized protein (136 aa).

Disordered stretches follow at residues 58 to 82 (TSDD…TTQT) and 112 to 136 (NNPK…VVTQ).

This is an uncharacterized protein from Dictyostelium discoideum (Social amoeba).